A 372-amino-acid polypeptide reads, in one-letter code: Cell division protein FtsZ 1 (372 aa).

Residues 51-55 (GAGCN), 138-140 (GTG), Glu169, Arg173, and Asp216 contribute to the GTP site. Acidic residues predominate over residues 350–360 (PEEETPLETPE). The segment at 350 to 372 (PEEETPLETPEESPSIEISIPEL) is disordered. The segment covering 361–372 (ESPSIEISIPEL) has biased composition (low complexity).

It belongs to the FtsZ family. In terms of assembly, homodimer. Polymerizes to form a dynamic ring structure in a strictly GTP-dependent manner. Interacts directly with several other division proteins.

It is found in the cytoplasm. Functionally, essential cell division protein that forms a contractile ring structure (Z ring) at the future cell division site. The regulation of the ring assembly controls the timing and the location of cell division. One of the functions of the FtsZ ring is to recruit other cell division proteins to the septum to produce a new cell wall between the dividing cells. Binds GTP and shows GTPase activity. The sequence is that of Cell division protein FtsZ 1 from Pyrococcus furiosus (strain ATCC 43587 / DSM 3638 / JCM 8422 / Vc1).